Consider the following 513-residue polypeptide: ATP synthase subunit alpha (513 aa).

169-176 (GDRQTGKT) contacts ATP.

The protein belongs to the ATPase alpha/beta chains family. As to quaternary structure, F-type ATPases have 2 components, CF(1) - the catalytic core - and CF(0) - the membrane proton channel. CF(1) has five subunits: alpha(3), beta(3), gamma(1), delta(1), epsilon(1). CF(0) has three main subunits: a(1), b(2) and c(9-12). The alpha and beta chains form an alternating ring which encloses part of the gamma chain. CF(1) is attached to CF(0) by a central stalk formed by the gamma and epsilon chains, while a peripheral stalk is formed by the delta and b chains.

The protein resides in the cell inner membrane. The catalysed reaction is ATP + H2O + 4 H(+)(in) = ADP + phosphate + 5 H(+)(out). In terms of biological role, produces ATP from ADP in the presence of a proton gradient across the membrane. The alpha chain is a regulatory subunit. The sequence is that of ATP synthase subunit alpha from Salmonella agona (strain SL483).